The sequence spans 131 residues: Small ribosomal subunit protein uS8 (131 aa).

Belongs to the universal ribosomal protein uS8 family. In terms of assembly, part of the 30S ribosomal subunit. Contacts proteins S5 and S12.

One of the primary rRNA binding proteins, it binds directly to 16S rRNA central domain where it helps coordinate assembly of the platform of the 30S subunit. In Mycoplasmopsis agalactiae (strain NCTC 10123 / CIP 59.7 / PG2) (Mycoplasma agalactiae), this protein is Small ribosomal subunit protein uS8.